A 355-amino-acid polypeptide reads, in one-letter code: Uroporphyrinogen decarboxylase (355 aa).

Substrate contacts are provided by residues Arg-23–Arg-27, Asp-72, Tyr-148, Ser-203, and His-321.

The protein belongs to the uroporphyrinogen decarboxylase family. In terms of assembly, homodimer.

The protein resides in the cytoplasm. The catalysed reaction is uroporphyrinogen III + 4 H(+) = coproporphyrinogen III + 4 CO2. The protein operates within porphyrin-containing compound metabolism; protoporphyrin-IX biosynthesis; coproporphyrinogen-III from 5-aminolevulinate: step 4/4. In terms of biological role, catalyzes the decarboxylation of four acetate groups of uroporphyrinogen-III to yield coproporphyrinogen-III. The polypeptide is Uroporphyrinogen decarboxylase (Chloroflexus aurantiacus (strain ATCC 29366 / DSM 635 / J-10-fl)).